A 411-amino-acid polypeptide reads, in one-letter code: Phosphoribosylaminoimidazole-succinocarboxamide synthase, chloroplastic (411 aa).

Residues 1-53 (MAQCVRSTLNPVRTPQSFTRKAYVKSPAFASVSFLRAVPEFNKYPKPCSLVMS) constitute a chloroplast transit peptide.

It belongs to the SAICAR synthetase family.

Its subcellular location is the plastid. The protein localises to the chloroplast. It carries out the reaction 5-amino-1-(5-phospho-D-ribosyl)imidazole-4-carboxylate + L-aspartate + ATP = (2S)-2-[5-amino-1-(5-phospho-beta-D-ribosyl)imidazole-4-carboxamido]succinate + ADP + phosphate + 2 H(+). The protein operates within purine metabolism; IMP biosynthesis via de novo pathway; 5-amino-1-(5-phospho-D-ribosyl)imidazole-4-carboxamide from 5-amino-1-(5-phospho-D-ribosyl)imidazole-4-carboxylate: step 1/2. The protein is Phosphoribosylaminoimidazole-succinocarboxamide synthase, chloroplastic (PUR7) of Arabidopsis thaliana (Mouse-ear cress).